A 492-amino-acid polypeptide reads, in one-letter code: NADH-quinone oxidoreductase subunit N (492 aa).

14 consecutive transmembrane segments (helical) span residues 18–38 (ILPM…NAFT), 45–65 (LNMF…LGLE), 80–100 (LSLV…FLAL), 108–128 (FQTA…QFMV), 133–153 (LLLM…LMAL), 167–187 (FTMG…FYLL), 209–229 (MLFA…VSLV), 250–270 (ISIV…GAFI), 277–297 (VEDI…LIAL), 305–325 (MLAY…FIHT), 333–353 (FVYW…LWLL), 381–401 (VAIL…FSVF), 415–435 (NHIL…FYYF), and 464–484 (MPIY…VFMM).

It belongs to the complex I subunit 2 family. In terms of assembly, NDH-1 is composed of 14 different subunits. Subunits NuoA, H, J, K, L, M, N constitute the membrane sector of the complex.

The protein localises to the cell inner membrane. It catalyses the reaction a quinone + NADH + 5 H(+)(in) = a quinol + NAD(+) + 4 H(+)(out). In terms of biological role, NDH-1 shuttles electrons from NADH, via FMN and iron-sulfur (Fe-S) centers, to quinones in the respiratory chain. The immediate electron acceptor for the enzyme in this species is believed to be ubiquinone. Couples the redox reaction to proton translocation (for every two electrons transferred, four hydrogen ions are translocated across the cytoplasmic membrane), and thus conserves the redox energy in a proton gradient. This is NADH-quinone oxidoreductase subunit N from Helicobacter acinonychis (strain Sheeba).